A 183-amino-acid polypeptide reads, in one-letter code: Acireductone dioxygenase (183 aa).

Residues H95, H97, E101, and H139 each contribute to the Fe(2+) site. Positions 95, 97, 101, and 139 each coordinate Ni(2+).

Belongs to the acireductone dioxygenase (ARD) family. As to quaternary structure, monomer. Fe(2+) serves as cofactor. Requires Ni(2+) as cofactor.

The catalysed reaction is 1,2-dihydroxy-5-(methylsulfanyl)pent-1-en-3-one + O2 = 3-(methylsulfanyl)propanoate + CO + formate + 2 H(+). The enzyme catalyses 1,2-dihydroxy-5-(methylsulfanyl)pent-1-en-3-one + O2 = 4-methylsulfanyl-2-oxobutanoate + formate + 2 H(+). It participates in amino-acid biosynthesis; L-methionine biosynthesis via salvage pathway; L-methionine from S-methyl-5-thio-alpha-D-ribose 1-phosphate: step 5/6. Functionally, catalyzes 2 different reactions between oxygen and the acireductone 1,2-dihydroxy-3-keto-5-methylthiopentene (DHK-MTPene) depending upon the metal bound in the active site. Fe-containing acireductone dioxygenase (Fe-ARD) produces formate and 2-keto-4-methylthiobutyrate (KMTB), the alpha-ketoacid precursor of methionine in the methionine recycle pathway. Ni-containing acireductone dioxygenase (Ni-ARD) produces methylthiopropionate, carbon monoxide and formate, and does not lie on the methionine recycle pathway. The chain is Acireductone dioxygenase from Hydrogenobaculum sp. (strain Y04AAS1).